Consider the following 87-residue polypeptide: Small ribosomal subunit protein bS20 (87 aa).

The disordered stretch occupies residues 1–24; that stretch reads MANTAQARKRARQSVERNKHNSSL.

This sequence belongs to the bacterial ribosomal protein bS20 family.

Its function is as follows. Binds directly to 16S ribosomal RNA. The sequence is that of Small ribosomal subunit protein bS20 from Bordetella avium (strain 197N).